The primary structure comprises 244 residues: Ribosomal RNA small subunit methyltransferase G (244 aa).

S-adenosyl-L-methionine-binding positions include G79, F84, A130–E131, and R150. The disordered stretch occupies residues K221 to M244.

The protein belongs to the methyltransferase superfamily. RNA methyltransferase RsmG family.

It is found in the cytoplasm. Specifically methylates the N7 position of a guanine in 16S rRNA. This is Ribosomal RNA small subunit methyltransferase G from Lactiplantibacillus plantarum (strain ATCC BAA-793 / NCIMB 8826 / WCFS1) (Lactobacillus plantarum).